We begin with the raw amino-acid sequence, 2920 residues long: Cadherin-related hmr-1 (2920 aa).

The signal sequence occupies residues 1–19 (MSWNILLILLISNLDEVLA). Residues 20–2779 (KTLLKLPSNA…AVSKLGISSP (2760 aa)) are Extracellular-facing. N-linked (GlcNAc...) asparagine glycans are attached at residues Asn72, Asn243, Asn253, Asn339, and Asn508. Cadherin domains are found at residues 322-422 (SSRS…PPSF), 425-530 (SPLP…PPQF), 531-642 (AKQE…VPTF), 643-747 (TRPL…SAVF), 749-865 (PTSQ…KPEF), 871-979 (YSDI…SPQF), 980-1093 (ERPS…APKW), 1097-1211 (PDCK…VPQF), 1212-1335 (TVDL…APSF), 1336-1436 (EEQK…APQF), 1438-1546 (QQKY…SPIF), 1548-1661 (ERLF…APFF), 1662-1772 (EKTR…APHI), and 1772-1874 (IHGA…EPYT). Residues Asn658, Asn685, Asn715, and Asn826 are each glycosylated (N-linked (GlcNAc...) asparagine). Asn1177 is a glycosylation site (N-linked (GlcNAc...) asparagine). Asn1417 is a glycosylation site (N-linked (GlcNAc...) asparagine). Asn1646 is a glycosylation site (N-linked (GlcNAc...) asparagine). 3 N-linked (GlcNAc...) asparagine glycosylation sites follow: Asn1935, Asn2224, and Asn2232. In terms of domain architecture, EGF-like 1 spans 2246 to 2283 (APPACQHSLCHNDGVCHNTNPGFFCECRNDGLKGARCQ). 3 disulfide bridges follow: Cys2250–Cys2261, Cys2255–Cys2270, and Cys2272–Cys2282. Residues 2284–2478 (GTTRSFGGNG…AFEQNSEKGC (195 aa)) enclose the Laminin G-like domain. Asn2307 and Asn2332 each carry an N-linked (GlcNAc...) asparagine glycan. 3 cysteine pairs are disulfide-bonded: Cys2452-Cys2478, Cys2501-Cys2515, and Cys2517-Cys2526. One can recognise an EGF-like 2 domain in the interval 2492–2527 (SLNHCIHGDCFADVQGSGAMVAKCVCDPGWGGARCE). The N-linked (GlcNAc...) asparagine glycan is linked to Asn2623. The helical transmembrane segment at 2780 to 2800 (AIILILVSLALLILLVMMMVV) threads the bilayer. The Cytoplasmic segment spans residues 2801 to 2920 (YTRRSPGAFE…VTLESIESAQ (120 aa)). Ser2839 carries the phosphoserine modification. The tract at residues 2858–2891 (IGGHPPHYPPRGMAPPKDDHELNSKIKDLETDQN) is disordered. A compositionally biased stretch (basic and acidic residues) spans 2873–2887 (PKDDHELNSKIKDLE). Ser2909 is modified (phosphoserine). The residue at position 2912 (Thr2912) is a Phosphothreonine. Ser2915 and Ser2918 each carry phosphoserine.

In terms of assembly, monomer in solution. Isoform a is a component of a core catenin-cadherin complex consisting of hmr-1, hmp-1 and hmp-2; the complex localizes to adherens junctions. Isoform a interacts with hmp-2; the interaction is direct. Isoform a interacts (via intracellular domain) with jac-1. Phosphorylation at T-2912 increases the binding affinity for hmp-2. Post-translationally, sumoylated. Sumoylation prevents accumulation at adherens junctions and decreases the binding affinity for hmp-2. Expressed in epidermal cells (at protein level). As to expression, neuron-specific.

Its subcellular location is the cell membrane. The protein localises to the cell junction. It localises to the adherens junction. The protein resides in the cell projection. It is found in the dendrite. Functionally, cadherins are calcium-dependent cell adhesion proteins. They preferentially interact with themselves in a homophilic manner in connecting cells; cadherins may thus contribute to the sorting of heterogeneous cell types. Required for adherens junction assembly and connecting adherens junctions to the cytoskeleton. Isoform a is required for cell migration during body enclosure and cell shape changes during body elongation. Required for proper localization of other junctional components, such as hmp-1, hmp-2, jac-1 and pac-1. Recruitment of pac-1 is required to establish cell polarity, independent of its role in cell adhesion. Required for primodial germ cell ingression and adherence to endodermal cells during gastrulation. Its function is as follows. Isoform b is involved in axonal guidance in a subset of motor neurons. This is Cadherin-related hmr-1 from Caenorhabditis elegans.